The following is a 34-amino-acid chain: Mytilin-A (34 aa).

4 disulfide bridges follow: C2–C27, C6–C29, C10–C31, and C15–C34.

It is found in the secreted. Has antibacterial activity against A.viridans, B.megaterium, M.luteus, E.faecalis, S.aureus and E.coli. It is active against the marine species A.carrageenovora, P.alginovora and C.drobachiensis. In Mytilus edulis (Blue mussel), this protein is Mytilin-A.